The following is a 193-amino-acid chain: Large ribosomal subunit protein bL12cy (193 aa).

The N-terminal 59 residues, 1 to 59 (MAATTLSIATTIRSSSFSSGLASAHHFPSRPLSIEFPFSFGVSSSSTLSHRAIYLHPIS), are a transit peptide targeting the chloroplast. The span at 170–187 (GVTKDEAEEDKTQLEEAG) shows a compositional bias: basic and acidic residues. Residues 170–193 (GVTKDEAEEDKTQLEEAGAKVSIV) are disordered.

The protein belongs to the bacterial ribosomal protein bL12 family.

Its subcellular location is the plastid. The protein localises to the chloroplast. The sequence is that of Large ribosomal subunit protein bL12cy (RPL12B) from Arabidopsis thaliana (Mouse-ear cress).